The primary structure comprises 627 residues: Transketolase-like protein 2 (627 aa).

Position 39 (His-39) interacts with substrate. Residues Ser-42, His-79, and 125–127 (GSL) each bind thiamine diphosphate. Asp-157 provides a ligand contact to Mg(2+). The thiamine diphosphate site is built by Gly-158 and Asn-187. Residues Asn-187 and Leu-189 each contribute to the Mg(2+) site. Lys-249 and His-263 together coordinate thiamine diphosphate. Positions 263, 323, and 350 each coordinate substrate. Thiamine diphosphate is bound by residues Glu-371 and Phe-397. The active-site Proton donor is the Glu-371. Substrate is bound by residues His-421 and Asp-429. Gln-433 is a binding site for thiamine diphosphate. Arg-479 provides a ligand contact to substrate.

Belongs to the transketolase family. In terms of assembly, homodimer. Mg(2+) is required as a cofactor. Requires Ca(2+) as cofactor. Mn(2+) serves as cofactor. The cofactor is Co(2+). It depends on thiamine diphosphate as a cofactor.

The enzyme catalyses D-sedoheptulose 7-phosphate + D-glyceraldehyde 3-phosphate = aldehydo-D-ribose 5-phosphate + D-xylulose 5-phosphate. In terms of biological role, plays an essential role in total transketolase activity and cell proliferation in cancer cells; after transfection with anti-TKTL1 siRNA, total transketolase activity dramatically decreases and proliferation was significantly inhibited in cancer cells. Plays a pivotal role in carcinogenesis. This Mus musculus (Mouse) protein is Transketolase-like protein 2 (Tktl2).